The following is an 826-amino-acid chain: MVAPVLETSHVFCCPNRVRGVLNWSSGPRGLLAFGTSCSVVLYDPLKRVVVTNLNGHTARVNCIQWICKQDGSPSTELVSGGSDNQVIHWEIEDNQLLKAVHLQGHEGPVYAVHAVYQRRTSDPALCTLIVSAAADSAVRLWSKKGPEVMCLQTLNFGNGFALALCLSFLPNTDVPILACGNDDCRIHIFAQQNDQFQKVLSLCGHEDWIRGVEWAAFGRDLFLASCSQDCLIRIWKLYIKSTSLETQDDDNIRLKENTFTIENESVKIAFAVTLETVLAGHENWVNAVHWQPVFYKDGVLQQPVRLLSASMDKTMILWAPDEESGVWLEQVRVGEVGGNTLGFYDCQFNEDGSMIIAHAFHGALHLWKQNTVNPREWTPEIVISGHFDGVQDLVWDPEGEFIITVGTDQTTRLFAPWKRKDQSQVTWHEIARPQIHGYDLKCLAMINRFQFVSGADEKVLRVFSAPRNFVENFCAITGQSLNHVLCNQDSDLPEGATVPALGLSNKAVFQGDIASQPSDEEELLTSTGFEYQQVAFQPSILTEPPTEDHLLQNTLWPEVQKLYGHGYEIFCVTCNSSKTLLASACKAAKKEHAAIILWNTTSWKQVQNLVFHSLTVTQMAFSPNEKFLLAVSRDRTWSLWKKQDTISPEFEPVFSLFAFTNKITSVHSRIIWSCDWSPDSKYFFTGSRDKKVVVWGECDSTDDCIEHNIGPCSSVLDVGGAVTAVSVCPVLHPSQRYVVAVGLECGKICLYTWKKTDQVPEINDWTHCVETSQSQSHTLAIRKLCWKNCSGKTEQKEAEGAEWLHFASCGEDHTVKIHRVNKCAL.

WD repeat units lie at residues 13 to 53 (CCPN…VVTN), 56 to 100 (GHTA…LLKA), 105 to 152 (GHEG…VMCL), 158 to 200 (GNGF…FQKV), 205 to 246 (GHED…TSLE), 281 to 329 (GHEN…GVWL), 339 to 378 (GNTL…PREW), 386 to 425 (GHFD…DQSQ), 436 to 474 (IHGY…VENF), 565 to 609 (GHGY…QVQN), 612 to 651 (FHSL…SPEF), 667 to 706 (VHSR…DDCI), 712 to 753 (PCSS…CLYT), and 777 to 826 (SHTL…KCAL).

It belongs to the WD repeat ELP2 family. Component of the elongator complex which consists of ELP1, ELP2, ELP3, ELP4, ELP5 and ELP6. Interacts with STAT3 and JAKs.

It is found in the cytoplasm. The protein resides in the nucleus. Its pathway is tRNA modification; 5-methoxycarbonylmethyl-2-thiouridine-tRNA biosynthesis. Functionally, component of the elongator complex which is required for multiple tRNA modifications, including mcm5U (5-methoxycarbonylmethyl uridine), mcm5s2U (5-methoxycarbonylmethyl-2-thiouridine), and ncm5U (5-carbamoylmethyl uridine). The elongator complex catalyzes the formation of carboxymethyluridine in the wobble base at position 34 in tRNAs. This chain is Elongator complex protein 2 (ELP2), found in Homo sapiens (Human).